Consider the following 275-residue polypeptide: 2,3,4,5-tetrahydropyridine-2,6-dicarboxylate N-succinyltransferase (275 aa).

Arg104 and Asp141 together coordinate substrate.

Belongs to the transferase hexapeptide repeat family. Homotrimer.

It is found in the cytoplasm. The catalysed reaction is (S)-2,3,4,5-tetrahydrodipicolinate + succinyl-CoA + H2O = (S)-2-succinylamino-6-oxoheptanedioate + CoA. Its pathway is amino-acid biosynthesis; L-lysine biosynthesis via DAP pathway; LL-2,6-diaminopimelate from (S)-tetrahydrodipicolinate (succinylase route): step 1/3. The sequence is that of 2,3,4,5-tetrahydropyridine-2,6-dicarboxylate N-succinyltransferase from Aeromonas salmonicida (strain A449).